The chain runs to 546 residues: MTPKEFKRLYRIISILLEQGIDELVPARYQPWPGRLARRSLFWLKNKRQGLNRGARIRLAFEALGPIFIKFGQMLSTRRDLLPPDIAEELALLQDRVPPFCGQAARRQIEASLGCTIETLFDDFDETPLASASIAQVHTARLKENGREIVIKVIRPDIEPVIEADLRLMQALARLVARFVPQSGRLRPIEVVEEYRKTILDELNLMREAANAIQLRRNFTGSEALYVPEVFTEHCREQVLVMERIYGIPVSDIAALEANGTNMKLLAERGVEVFFTQVFRDSFFHADMHPGNIFVSYEHPENPLWIGIDCGIVGTLNREDKRYLAENFLAFFNRDYRRVAELHVESGWVPPDTKVDEFEFAIRTVLEPIFEKPLSEISFGHVLLNLFNTARRFNMQVQPQLVLLQKTLLYVEGLGRQLYPQLDLWQTAKPYLENWMYQQVGPKAVWNAIKEKAPFWAEKLPELPELVYETLRQTRHQQRHFDQMFADFRRHSRRQGQARYLLGVGASLLLAGVFLLTQKQHIEWGQISLAGAGLCWLLGWLRTRSH.

Residues 123 to 501 (DFDETPLASA…SRRQGQARYL (379 aa)) enclose the Protein kinase domain. ATP-binding positions include 129 to 137 (LASASIAQV) and lysine 152. Aspartate 287 serves as the catalytic Proton acceptor. A run of 2 helical transmembrane segments spans residues 498-517 (ARYL…FLLT) and 522-541 (IEWG…LGWL).

Belongs to the ABC1 family. UbiB subfamily.

Its subcellular location is the cell inner membrane. Its pathway is cofactor biosynthesis; ubiquinone biosynthesis [regulation]. In terms of biological role, is probably a protein kinase regulator of UbiI activity which is involved in aerobic coenzyme Q (ubiquinone) biosynthesis. The sequence is that of Probable protein kinase UbiB from Aeromonas hydrophila subsp. hydrophila (strain ATCC 7966 / DSM 30187 / BCRC 13018 / CCUG 14551 / JCM 1027 / KCTC 2358 / NCIMB 9240 / NCTC 8049).